The primary structure comprises 257 residues: Deoxyribose-phosphate aldolase (257 aa).

Asp102 functions as the Proton donor/acceptor in the catalytic mechanism. Catalysis depends on Lys166, which acts as the Schiff-base intermediate with acetaldehyde. Catalysis depends on Lys198, which acts as the Proton donor/acceptor.

It belongs to the DeoC/FbaB aldolase family. DeoC type 2 subfamily.

The protein resides in the cytoplasm. The enzyme catalyses 2-deoxy-D-ribose 5-phosphate = D-glyceraldehyde 3-phosphate + acetaldehyde. It functions in the pathway carbohydrate degradation; 2-deoxy-D-ribose 1-phosphate degradation; D-glyceraldehyde 3-phosphate and acetaldehyde from 2-deoxy-alpha-D-ribose 1-phosphate: step 2/2. In terms of biological role, catalyzes a reversible aldol reaction between acetaldehyde and D-glyceraldehyde 3-phosphate to generate 2-deoxy-D-ribose 5-phosphate. This Aeromonas salmonicida (strain A449) protein is Deoxyribose-phosphate aldolase.